A 65-amino-acid chain; its full sequence is MASISVDSNESIDKALRRFNKAVQADGILTEARRREHYEKPSVKRKRKEAARLRKLQKMAREANN.

The span at 33 to 42 shows a compositional bias: basic and acidic residues; that stretch reads RRREHYEKPS. The segment at 33–65 is disordered; the sequence is RRREHYEKPSVKRKRKEAARLRKLQKMAREANN. Over residues 43–58 the composition is skewed to basic residues; it reads VKRKRKEAARLRKLQK.

It belongs to the bacterial ribosomal protein bS21 family.

This Herpetosiphon aurantiacus (strain ATCC 23779 / DSM 785 / 114-95) protein is Small ribosomal subunit protein bS21.